Reading from the N-terminus, the 519-residue chain is Cell division cycle protein 20 homolog B (519 aa).

The tract at residues 77-106 (WQLSPARDPESSSSVEEGPPSHTPESLASG) is disordered. Residues 87 to 96 (SSSSVEEGPP) show a composition bias toward low complexity. 6 WD repeats span residues 229 to 266 (RNDY…WIEN), 271 to 310 (VCCH…QLRN), 353 to 392 (YHKE…GVQG), 399 to 441 (PQST…NIQT), 443 to 484 (STQS…RSGG), and 487 to 519 (GHRD…WKCC).

Belongs to the WD repeat CDC20/Fizzy family. In terms of tissue distribution, expressed in multiciliated cells (MCCs).

It localises to the cytoplasm. Protein regulator of centriole-deuterosome disengagement and subsequently participates in the ciliogenesis in multiciliated cells (MCCs). This Mus musculus (Mouse) protein is Cell division cycle protein 20 homolog B.